The primary structure comprises 651 residues: UvrABC system protein C (651 aa).

In terms of domain architecture, GIY-YIG spans 20 to 97 (ERCGVYRMFD…IKKFQPKFNI (78 aa)). Residues 207-242 (KALQENLSKKMEELSSQMRFEEAAEIRDRIKALSYV) enclose the UVR domain.

The protein belongs to the UvrC family. In terms of assembly, interacts with UvrB in an incision complex.

It is found in the cytoplasm. Functionally, the UvrABC repair system catalyzes the recognition and processing of DNA lesions. UvrC both incises the 5' and 3' sides of the lesion. The N-terminal half is responsible for the 3' incision and the C-terminal half is responsible for the 5' incision. This chain is UvrABC system protein C, found in Rickettsia akari (strain Hartford).